The sequence spans 160 residues: Ureidoglycolate lyase (160 aa).

Belongs to the ureidoglycolate lyase family. Homodimer. The cofactor is Ni(2+).

It catalyses the reaction (S)-ureidoglycolate = urea + glyoxylate. It functions in the pathway nitrogen metabolism; (S)-allantoin degradation. Its function is as follows. Catalyzes the catabolism of the allantoin degradation intermediate (S)-ureidoglycolate, generating urea and glyoxylate. Involved in the anaerobic utilization of allantoin as sole nitrogen source. Reinforces the induction of genes involved in the degradation of allantoin and glyoxylate by producing glyoxylate. In Escherichia coli O6:H1 (strain CFT073 / ATCC 700928 / UPEC), this protein is Ureidoglycolate lyase.